Here is a 448-residue protein sequence, read N- to C-terminus: tRNA-2-methylthio-N(6)-dimethylallyladenosine synthase (448 aa).

The 116-residue stretch at 3–118 (KKVFIKTFGC…LPELLNARAA (116 aa)) folds into the MTTase N-terminal domain. [4Fe-4S] cluster contacts are provided by cysteine 12, cysteine 49, cysteine 81, cysteine 155, cysteine 159, and cysteine 162. The region spanning 141–374 (RVEGASAFVS…QAVINRNILE (234 aa)) is the Radical SAM core domain. Residues 377–440 (QERVGTVQRL…TYTLRGEVVM (64 aa)) enclose the TRAM domain.

This sequence belongs to the methylthiotransferase family. MiaB subfamily. In terms of assembly, monomer. It depends on [4Fe-4S] cluster as a cofactor.

The protein resides in the cytoplasm. The catalysed reaction is N(6)-dimethylallyladenosine(37) in tRNA + (sulfur carrier)-SH + AH2 + 2 S-adenosyl-L-methionine = 2-methylsulfanyl-N(6)-dimethylallyladenosine(37) in tRNA + (sulfur carrier)-H + 5'-deoxyadenosine + L-methionine + A + S-adenosyl-L-homocysteine + 2 H(+). In terms of biological role, catalyzes the methylthiolation of N6-(dimethylallyl)adenosine (i(6)A), leading to the formation of 2-methylthio-N6-(dimethylallyl)adenosine (ms(2)i(6)A) at position 37 in tRNAs that read codons beginning with uridine. The chain is tRNA-2-methylthio-N(6)-dimethylallyladenosine synthase from Acidovorax sp. (strain JS42).